The primary structure comprises 95 residues: uncharacterized protein (95 aa).

This is an uncharacterized protein from Acheta domesticus (House cricket).